We begin with the raw amino-acid sequence, 468 residues long: Chromosomal replication initiator protein DnaA (468 aa).

Residues 1–84 (MSSSLWLQCL…RFEVGSRRVA (84 aa)) form a domain I, interacts with DnaA modulators region. The tract at residues 84–131 (AAPKPAPTRTPADVAAESSAPAQLQARKPVHKTWDDDAQVIADINHRS) is domain II. Low complexity predominate over residues 85 to 95 (APKPAPTRTPA). Positions 85–104 (APKPAPTRTPADVAAESSAP) are disordered. The segment at 132–348 (NVNPKHKFNN…GALNRVIANA (217 aa)) is domain III, AAA+ region. ATP is bound by residues G176, G178, K179, and T180. Residues 349–468 (NFTGRPITID…YSNLIRTLSS (120 aa)) form a domain IV, binds dsDNA region.

This sequence belongs to the DnaA family. As to quaternary structure, oligomerizes as a right-handed, spiral filament on DNA at oriC.

It localises to the cytoplasm. Plays an essential role in the initiation and regulation of chromosomal replication. ATP-DnaA binds to the origin of replication (oriC) to initiate formation of the DNA replication initiation complex once per cell cycle. Binds the DnaA box (a 9 base pair repeat at the origin) and separates the double-stranded (ds)DNA. Forms a right-handed helical filament on oriC DNA; dsDNA binds to the exterior of the filament while single-stranded (ss)DNA is stabiized in the filament's interior. The ATP-DnaA-oriC complex binds and stabilizes one strand of the AT-rich DNA unwinding element (DUE), permitting loading of DNA polymerase. After initiation quickly degrades to an ADP-DnaA complex that is not apt for DNA replication. Binds acidic phospholipids. Its function is as follows. Complements a temperature-sensitive E.coli mutant, the DnaA consensus is 5'-TT(A/T)TNCACA-3'. The sequence is that of Chromosomal replication initiator protein DnaA from Vibrio harveyi (Beneckea harveyi).